Reading from the N-terminus, the 314-residue chain is uncharacterized protein (314 aa).

A run of 2 helical transmembrane segments spans residues 23 to 43 (LALGPVHPGGPTLIDLLMALF) and 98 to 118 (MASGIGGALSGALGGVMGPLT). The span at 165 to 184 (GLGSGAGGGDVGGGGAGGTT) shows a compositional bias: gly residues. The disordered stretch occupies residues 165 to 314 (GLGSGAGGGD…APDEKTDAGE (150 aa)). Pro residues predominate over residues 190–202 (GPPPVPTSSPPTT). Low complexity-rich tracts occupy residues 203 to 212 (PAGAPTKSAT) and 219 to 232 (ASPASAHMGAAGMP). Residues 221 to 241 (PASAHMGAAGMPMVPPGAMGA) form a helical membrane-spanning segment. Positions 294–314 (LLPEHKDFGRIAPDEKTDAGE) are enriched in basic and acidic residues.

Its subcellular location is the cell membrane. This is an uncharacterized protein from Mycobacterium tuberculosis (strain ATCC 25618 / H37Rv).